Reading from the N-terminus, the 223-residue chain is UPF0758 protein Plut_0598 (223 aa).

An MPN domain is found at 100 to 222 (RVQGAKDVFE…WFSFRESNLL (123 aa)). 3 residues coordinate Zn(2+): H171, H173, and D184. The short motif at 171–184 (HNHPSGDTEPSNAD) is the JAMM motif element.

This sequence belongs to the UPF0758 family.

The sequence is that of UPF0758 protein Plut_0598 from Chlorobium luteolum (strain DSM 273 / BCRC 81028 / 2530) (Pelodictyon luteolum).